An 89-amino-acid chain; its full sequence is Small ribosomal subunit protein uS17 (89 aa).

Belongs to the universal ribosomal protein uS17 family. Part of the 30S ribosomal subunit.

One of the primary rRNA binding proteins, it binds specifically to the 5'-end of 16S ribosomal RNA. The polypeptide is Small ribosomal subunit protein uS17 (Nocardia farcinica (strain IFM 10152)).